A 152-amino-acid polypeptide reads, in one-letter code: Deoxyuridine 5'-triphosphate nucleotidohydrolase (152 aa).

Substrate is bound by residues 71-73, Asn-84, 88-90, and Met-98; these read RSG and LID.

It belongs to the dUTPase family. Requires Mg(2+) as cofactor.

The catalysed reaction is dUTP + H2O = dUMP + diphosphate + H(+). It functions in the pathway pyrimidine metabolism; dUMP biosynthesis; dUMP from dCTP (dUTP route): step 2/2. This enzyme is involved in nucleotide metabolism: it produces dUMP, the immediate precursor of thymidine nucleotides and it decreases the intracellular concentration of dUTP so that uracil cannot be incorporated into DNA. The sequence is that of Deoxyuridine 5'-triphosphate nucleotidohydrolase from Shewanella sp. (strain ANA-3).